We begin with the raw amino-acid sequence, 422 residues long: GTPase Obg (422 aa).

The Obg domain occupies 4–161 (LHFVDEAFNE…FKIKTELKVL (158 aa)). The OBG-type G domain occupies 162 to 327 (ADIGLLGFPS…LKYEMSSLLQ (166 aa)). Residues 168 to 175 (GFPSVGKS), 193 to 197 (FTTIK), 214 to 217 (DLPG), 281 to 284 (NKMD), and 308 to 310 (SLV) contribute to the GTP site. The Mg(2+) site is built by Ser175 and Thr195. Residues 345-422 (TLPDNQNTIS…KICDRLFYFL (78 aa)) enclose the OCT domain.

The protein belongs to the TRAFAC class OBG-HflX-like GTPase superfamily. OBG GTPase family. Monomer. Requires Mg(2+) as cofactor.

Its subcellular location is the cytoplasm. An essential GTPase which binds GTP, GDP and possibly (p)ppGpp with moderate affinity, with high nucleotide exchange rates and a fairly low GTP hydrolysis rate. Plays a role in control of the cell cycle, stress response, ribosome biogenesis and in those bacteria that undergo differentiation, in morphogenesis control. This Onion yellows phytoplasma (strain OY-M) protein is GTPase Obg.